Reading from the N-terminus, the 388-residue chain is MKFVDEAVIRVEAGDGGSGCVSFRREKYIPDGGPDGGDGGDGGSVYLEADENFNTLIEYRFERFHMAERGENGRGRDCTGHSGKDLILKVPVGTRAIDHDTEEVLGDLTTHGQKLLVAKGGFHGLGNTRFKSSTNRAPRQKTLGTPGEVRSLKLELLLLADVGLLGMPNAGKSTFIRAVSRATPKVADYPFTTLVPNLGVVNPRPGQSYVIADIPGLIEGAAEGAGLGIRFLKHLERCRILLHIIDIEPIDGTDPVDSARAIVGELEKYSPKLASKPRWLVFNKADLLLEDELKEKAERVVKELGWEGEVYTISAYGRDGTKELAAKLWDFIQSLPPEDKDANPEDEVEFKWDNYHQANIDAINEDYDDDFDDDFDDDDYDVEVIYQR.

The Obg domain maps to Met-1–Leu-159. An OBG-type G domain is found at Ala-160–Gln-333. GTP is bound by residues Gly-166–Ser-173, Phe-191–Val-195, Asp-213–Gly-216, Asn-283–Asp-286, and Ser-314–Tyr-316. 2 residues coordinate Mg(2+): Ser-173 and Thr-193.

The protein belongs to the TRAFAC class OBG-HflX-like GTPase superfamily. OBG GTPase family. In terms of assembly, monomer. Mg(2+) is required as a cofactor.

Its subcellular location is the cytoplasm. Functionally, an essential GTPase which binds GTP, GDP and possibly (p)ppGpp with moderate affinity, with high nucleotide exchange rates and a fairly low GTP hydrolysis rate. Plays a role in control of the cell cycle, stress response, ribosome biogenesis and in those bacteria that undergo differentiation, in morphogenesis control. In Shewanella oneidensis (strain ATCC 700550 / JCM 31522 / CIP 106686 / LMG 19005 / NCIMB 14063 / MR-1), this protein is GTPase Obg.